A 156-amino-acid polypeptide reads, in one-letter code: LIM domain only protein 3 (156 aa).

LIM zinc-binding domains follow at residues 22–84 (KGCA…LFGV) and 86–148 (GNCA…GLMK).

In Xenopus laevis (African clawed frog), this protein is LIM domain only protein 3.